Here is a 308-residue protein sequence, read N- to C-terminus: Ribonuclease HIII (308 aa).

The region spanning 91–308 (KNVIGSDEVG…TEKALKMVKK (218 aa)) is the RNase H type-2 domain. 3 residues coordinate a divalent metal cation: Asp-97, Glu-98, and Asp-202.

This sequence belongs to the RNase HII family. RnhC subfamily. It depends on Mn(2+) as a cofactor. The cofactor is Mg(2+).

It is found in the cytoplasm. The enzyme catalyses Endonucleolytic cleavage to 5'-phosphomonoester.. Functionally, endonuclease that specifically degrades the RNA of RNA-DNA hybrids. The polypeptide is Ribonuclease HIII (Listeria monocytogenes serotype 4b (strain F2365)).